Reading from the N-terminus, the 151-residue chain is IFN signaling evasion protein OPG029 (151 aa).

Belongs to the orthopoxvirus OPG029 family. As to quaternary structure, interacts with host TANK, TBKBP1 and AZI2; these interactions prevent interferon production. Interacts with host STAT2.

Its function is as follows. Prevents establishment of cellular antiviral state by blocking virus-induced phosphorylation and activation of interferon regulatory factors 3/IRF3 and 7/IRF7, transcription factors critical for the induction of interferons alpha and beta. This blockage is produced through the inhibition of host TBK1, by binding host TBK1 adapter proteins TBKBP1 and AZI2, thereby producing a strong inhibition of the phosphorylation and activation of IRF3 and IRF7. Also acts as an inhibitor of the cellular response to type I IFN by interacting with host STAT2. Mechanistically, exerts its inhibitory effect after host ISGF3 complex (composed of STAT1, STAT2 and IRF9) binding to the interferon stimulated response element (ISRE). This Vaccinia virus (strain Western Reserve) (VACV) protein is IFN signaling evasion protein OPG029 (OPG029).